The chain runs to 748 residues: Serine/threonine-protein kinase CG17528 (748 aa).

Composition is skewed to polar residues over residues 22–35 and 47–59; these read QASPSATSPQSVPS and EKTNQPHNVQEDN. 2 disordered regions span residues 22–41 and 47–81; these read QASPSATSPQSVPSKANVVT and EKTNQPHNVQEDNNYNRDCDSPESSSSEQDKELDD. A phosphoserine mark is found at serine 67, serine 70, serine 73, serine 87, serine 88, and serine 89. Residue threonine 91 is modified to Phosphothreonine. Position 93 is a phosphoserine (serine 93). Threonine 100 carries the post-translational modification Phosphothreonine. 2 consecutive Doublecortin domains span residues 158–244 and 313–396; these read LRIK…VEYN and RIVT…AEDF. The Protein kinase domain occupies 477-735; that stretch reads YSLGRIIGDG…SEDILDHSWT (259 aa). Residues 483-491 and lysine 506 contribute to the ATP site; that span reads IGDGNFAIV. The Proton acceptor role is filled by aspartate 598.

The protein belongs to the protein kinase superfamily. CAMK Ser/Thr protein kinase family. CaMK subfamily.

The catalysed reaction is L-seryl-[protein] + ATP = O-phospho-L-seryl-[protein] + ADP + H(+). It catalyses the reaction L-threonyl-[protein] + ATP = O-phospho-L-threonyl-[protein] + ADP + H(+). This chain is Serine/threonine-protein kinase CG17528, found in Drosophila melanogaster (Fruit fly).